Consider the following 354-residue polypeptide: Homer protein homolog 2 (354 aa).

The region spanning 1-110 is the WH1 domain; that stretch reads MGEQPIFTTR…EKFQEVREAA (110 aa). Positions 92 to 120 form a coiled coil; it reads SEQQLTKFAEKFQEVREAARLARDKSQEK. Residues 114 to 163 form a disordered region; sequence RDKSQEKIETSSNHSQESGCETPSSTQASSVNGTDDEKASHASPADTHLK. Polar residues predominate over residues 123-146; that stretch reads TSSNHSQESGCETPSSTQASSVNG. Positions 160 to 329 form a coiled coil; the sequence is THLKSENDKL…RHLKGELKSF (170 aa).

This sequence belongs to the Homer family. In terms of assembly, isoform 1 and isoform 2 encode coiled-coil structures that mediate homo- and heteromultimerization. Interacts with NFATC2; interaction is reduced by AKT activation. Interacts with NFATC1 and NFATC4. Interacts with DAGLA (via PPXXF motif); this interaction is required for the cell membrane localization of DAGLA. In terms of tissue distribution, constitutively expressed in the adult hippocampus.

It is found in the cytoplasm. The protein localises to the cell membrane. The protein resides in the postsynaptic density. Its subcellular location is the synapse. It localises to the cell projection. It is found in the stereocilium. Functionally, postsynaptic density scaffolding protein. Binds and cross-links cytoplasmic regions of GRM1, GRM5, ITPR1, DNM3, RYR1, RYR2, SHANK1 and SHANK3. By physically linking GRM1 and GRM5 with ER-associated ITPR1 receptors, it aids the coupling of surface receptors to intracellular calcium release. May also couple GRM1 to PI3 kinase through its interaction with AGAP2. Isoforms can be differently regulated and may play an important role in maintaining the plasticity at glutamatergic synapses. Required for normal hearing. Negatively regulates T cell activation by inhibiting the calcineurin-NFAT pathway. Acts by competing with calcineurin/PPP3CA for NFAT protein binding, hence preventing NFAT activation by PPP3CA. This is Homer protein homolog 2 from Rattus norvegicus (Rat).